The chain runs to 232 residues: Phosphoglycolate phosphatase (232 aa).

Asp13 (nucleophile) is an active-site residue. Positions 13, 15, and 175 each coordinate Mg(2+).

It belongs to the HAD-like hydrolase superfamily. CbbY/CbbZ/Gph/YieH family. Monomer. It depends on Mg(2+) as a cofactor. Chloride is required as a cofactor.

The catalysed reaction is 2-phosphoglycolate + H2O = glycolate + phosphate. Its pathway is organic acid metabolism; glycolate biosynthesis; glycolate from 2-phosphoglycolate: step 1/1. Its function is as follows. Specifically catalyzes the dephosphorylation of 2-phosphoglycolate. Is involved in the dissimilation of the intracellular 2-phosphoglycolate formed during the DNA repair of 3'-phosphoglycolate ends, a major class of DNA lesions induced by oxidative stress. The sequence is that of Phosphoglycolate phosphatase from Yersinia pestis.